We begin with the raw amino-acid sequence, 156 residues long: SsrA-binding protein (156 aa).

Belongs to the SmpB family.

The protein localises to the cytoplasm. Functionally, required for rescue of stalled ribosomes mediated by trans-translation. Binds to transfer-messenger RNA (tmRNA), required for stable association of tmRNA with ribosomes. tmRNA and SmpB together mimic tRNA shape, replacing the anticodon stem-loop with SmpB. tmRNA is encoded by the ssrA gene; the 2 termini fold to resemble tRNA(Ala) and it encodes a 'tag peptide', a short internal open reading frame. During trans-translation Ala-aminoacylated tmRNA acts like a tRNA, entering the A-site of stalled ribosomes, displacing the stalled mRNA. The ribosome then switches to translate the ORF on the tmRNA; the nascent peptide is terminated with the 'tag peptide' encoded by the tmRNA and targeted for degradation. The ribosome is freed to recommence translation, which seems to be the essential function of trans-translation. The polypeptide is SsrA-binding protein (Paracoccus denitrificans (strain Pd 1222)).